The primary structure comprises 35 residues: Photosystem II reaction center protein T (35 aa).

A helical membrane pass occupies residues 3-23; sequence AFAYTLLMTLVVATLFFAVAF.

Belongs to the PsbT family. PSII is composed of 1 copy each of membrane proteins PsbA, PsbB, PsbC, PsbD, PsbE, PsbF, PsbH, PsbI, PsbJ, PsbK, PsbL, PsbM, PsbT, PsbX, PsbY, Psb30/Ycf12, peripheral proteins PsbO, CyanoQ (PsbQ), PsbU, PsbV and a large number of cofactors. It forms dimeric complexes.

It is found in the cellular thylakoid membrane. Found at the monomer-monomer interface of the photosystem II (PS II) dimer, plays a role in assembly and dimerization of PSII. PSII is a light-driven water plastoquinone oxidoreductase, using light energy to abstract electrons from H(2)O, generating a proton gradient subsequently used for ATP formation. This is Photosystem II reaction center protein T from Prochlorococcus marinus (strain MIT 9303).